The sequence spans 223 residues: Small ribosomal subunit protein uS11m (223 aa).

A mitochondrion-targeting transit peptide spans 1–38; that stretch reads MVLKHSVTYNLSFFISFTFSSIFFSSLILFLVYKSVLS.

The protein belongs to the universal ribosomal protein uS11 family. In terms of assembly, component of the mitochondrial small ribosomal subunit (mt-SSU). Mature yeast 74S mitochondrial ribosomes consist of a small (37S) and a large (54S) subunit. The 37S small subunit contains a 15S ribosomal RNA (15S mt-rRNA) and at least 32 different proteins. The 54S large subunit contains a 21S rRNA (21S mt-rRNA) and at least 45 different proteins.

The protein localises to the mitochondrion. In terms of biological role, component of the mitochondrial ribosome (mitoribosome), a dedicated translation machinery responsible for the synthesis of mitochondrial genome-encoded proteins, including at least some of the essential transmembrane subunits of the mitochondrial respiratory chain. The mitoribosomes are attached to the mitochondrial inner membrane and translation products are cotranslationally integrated into the membrane. This is Small ribosomal subunit protein uS11m (mrps18) from Schizosaccharomyces pombe (strain 972 / ATCC 24843) (Fission yeast).